A 505-amino-acid chain; its full sequence is TBC1 domain family member 22B (505 aa).

An N-acetylalanine modification is found at alanine 2. 2 positions are modified to phosphoserine: serine 58 and serine 116. The interval 105–146 (SKLRVKPERSQSTTSDVPANYKVIKSSSDAQLSRNSSDTCLR) is disordered. Over residues 129-146 (KSSSDAQLSRNSSDTCLR) the composition is skewed to polar residues. Residue serine 154 is modified to Phosphoserine. In terms of domain architecture, Rab-GAP TBC spans 210–434 (GVPREVRPIT…RLWDTYQSEP (225 aa)).

Interacts with ACBD3 and ARFGEF1. Interacts with YWHAB, YWHAE, YWHAG, YWHAH, YWHAQ and YWHAZ.

In terms of biological role, may act as a GTPase-activating protein for Rab family protein(s). This chain is TBC1 domain family member 22B (TBC1D22B), found in Homo sapiens (Human).